We begin with the raw amino-acid sequence, 971 residues long: GEM-interacting protein (971 aa).

Position 19 is a phosphoserine (Ser-19). 3 disordered regions span residues 41–79 (AGDP…PEGP), 231–267 (LRAR…AQAK), and 383–476 (DTKK…IENG). Residues 44–56 (PVRREDLEPDKAD) show a composition bias toward basic and acidic residues. A compositionally biased stretch (polar residues) spans 59-69 (TVVTEENSEAS). Ser-75, Ser-235, Ser-238, Ser-247, Ser-436, and Ser-440 each carry phosphoserine. The F-BAR domain maps to 85–348 (EELDLRLIRT…CCVPFEPGQR (264 aa)). Residues 458–471 (SSDDFEERDPDLGD) show a composition bias toward acidic residues. The segment at 492-536 (THRLRRLRGPAKCRECEAFMVSGTECEECFLTCHKRCLETLLILC) adopts a Phorbol-ester/DAG-type zinc-finger fold. In terms of domain architecture, Rho-GAP spans 553–756 (LQLPRDFPEE…FLIVHYEQIF (204 aa)). Position 659 is a phosphothreonine (Thr-659). Residues 799 to 865 (IALDSSPDPK…LGAQSRGHFS (67 aa)) are disordered. The span at 805-817 (PDPKHHSALEKCP) shows a compositional bias: basic and acidic residues. Phosphoserine occurs at positions 884, 908, and 924.

As to quaternary structure, interacts with GEM through its N-terminal.

Stimulates, in vitro and in vivo, the GTPase activity of RhoA. The sequence is that of GEM-interacting protein (Gmip) from Mus musculus (Mouse).